The following is a 337-amino-acid chain: Ycf66-like protein (337 aa).

The segment at 111 to 337 (TEAELDQLEP…GADDQERFDY (227 aa)) is disordered. Residues 113-123 (AELDQLEPEDE) are compositionally biased toward acidic residues. 2 stretches are compositionally biased toward basic and acidic residues: residues 133–143 (RGYDDDARSGR) and 253–269 (FGDR…RPYE). The span at 304-316 (QSRSGNPRSQRPS) shows a compositional bias: polar residues.

This sequence belongs to the ycf66 family.

In Synechocystis sp. (strain ATCC 27184 / PCC 6803 / Kazusa), this protein is Ycf66-like protein.